A 101-amino-acid polypeptide reads, in one-letter code: Small ribosomal subunit protein bS18c (101 aa).

A compositionally biased stretch (basic residues) spans 1–19 (MDKSKQLFRKSKGSFRRRL). Residues 1 to 23 (MDKSKQLFRKSKGSFRRRLPPIG) are disordered.

This sequence belongs to the bacterial ribosomal protein bS18 family. As to quaternary structure, part of the 30S ribosomal subunit.

The protein resides in the plastid. It localises to the chloroplast. The protein is Small ribosomal subunit protein bS18c of Acorus gramineus (Dwarf sweet flag).